We begin with the raw amino-acid sequence, 120 residues long: Large ribosomal subunit protein bL12 (120 aa).

The protein belongs to the bacterial ribosomal protein bL12 family. Homodimer. Part of the ribosomal stalk of the 50S ribosomal subunit. Forms a multimeric L10(L12)X complex, where L10 forms an elongated spine to which 2 to 4 L12 dimers bind in a sequential fashion. Binds GTP-bound translation factors.

In terms of biological role, forms part of the ribosomal stalk which helps the ribosome interact with GTP-bound translation factors. Is thus essential for accurate translation. The chain is Large ribosomal subunit protein bL12 from Pseudoalteromonas translucida (strain TAC 125).